Reading from the N-terminus, the 780-residue chain is Cullin-5 (780 aa).

Position 34 is a phosphoserine (serine 34). A Phosphothreonine modification is found at threonine 210. The region spanning 711 to 772 (RILRTQEAII…HRYIRRDEAD (62 aa)) is the Cullin neddylation domain. Lysine 724 participates in a covalent cross-link: Glycyl lysine isopeptide (Lys-Gly) (interchain with G-Cter in NEDD8).

The protein belongs to the cullin family. In terms of assembly, component of multiple cullin-5-RING E3 ubiquitin-protein ligase complexes (ECS complexes, also named CRL5 complexes) formed of CUL5, Elongin BC (ELOB and ELOC), RNF7/RBX2 and a variable SOCS box domain-containing protein as substrate-specific recognition component. CUL5-containing ECS complexes specifically contain RNF7/RBX2, and not RBX1, as catalytic subunit. Component of the ECS(ASB2) complex with the substrate recognition component ASB2. Component of the ECS(ASB6) complex with the substrate recognition component ASB6. Component of the ECS(ASB7) complex with the substrate recognition component ASB7. Component of the ECS(ASB9) complex with the substrate recognition component ASB9. Component of the ECS(ASB11) complex with the substrate recognition component ASB11. Component of the ECS(ASB12) complex with the substrate recognition component ASB12. Component of the ECS(LRRC41) complex with the substrate recognition component LRRC41. Component of the ECS(SOCS1) complex with the substrate recognition component SOCS1. Component of the ECS(SOCS2) complex with the substrate recognition component SOCS2. Component of the ECS(WSB1) complex with the substrate recognition subunit WSB1. Component of the ECS(SOCS3) complex with the substrate recognition component SOCS3. Component of the ECS(SOCS7) complex with the substrate recognition component SOCS7. Component of the ECS(SPSB1) complex with the substrate recognition component SPSB1. Component of the ECS(SPSB3) complex with the substrate recognition component SPSB3. Component of the ECS(SPSB2) complex with the substrate recognition component SPSB2. Component of the ECS(SPSB4) complex with the substrate recognition component SPSB4. Component of the ECS(RAB40) complex with the substrate recognition subunit RAB40A, RAB40B or RAB40C. Component of the ECS(KLHDC1) complex with the substrate recognition component KLHDC1. Component of the ECS(PCMTD1) complex with the substrate recognition subunit PCMTD1. May also form complexes containing RBX1 and ELOA or VHL; additional evidence is however required to confirm this result in vivo. Interacts (when neddylated) with ARIH2; leading to activate the E3 ligase activity of ARIH2. Interacts with ERCC6; the interaction is induced by DNA damaging agents or inhibitors of RNA polymerase II elongation. Interacts with ELOA (via the BC-box). Interacts (unneddylated form) with DCUN1D1, DCUN1D2, DCUN1D3, DCUN1D4 and DCUN1D5; these interactions promote the cullin neddylation. Post-translationally, neddylated; which enhances the ubiquitination activity of ECS complexes and prevents binding of the inhibitor CAND1. Deneddylated via its interaction with the COP9 signalosome (CSN).

Its subcellular location is the nucleus. It functions in the pathway protein modification; protein ubiquitination. Functionally, core component of multiple cullin-5-RING E3 ubiquitin-protein ligase complexes (ECS complexes, also named CRL5 complexes), which mediate the ubiquitination and subsequent proteasomal degradation of target proteins. Acts a scaffold protein that contributes to catalysis through positioning of the substrate and the ubiquitin-conjugating enzyme. The functional specificity of the E3 ubiquitin-protein ligase complex depends on the variable SOCS box-containing substrate recognition component. Acts as a key regulator of neuron positioning during cortex development: component of various SOCS-containing ECS complexes, such as the ECS(SOCS7) complex, that regulate reelin signaling by mediating ubiquitination and degradation of DAB1. ECS(SOCS1) seems to direct ubiquitination of JAK2. The ECS(SOCS2) complex mediates the ubiquitination and subsequent proteasomal degradation of phosphorylated EPOR and GHR. The ECS(SPSB3) complex catalyzes ubiquitination of nuclear CGAS. ECS(KLHDC1) complex is part of the DesCEND (destruction via C-end degrons) pathway and mediates ubiquitination and degradation of truncated SELENOS selenoprotein produced by failed UGA/Sec decoding, which ends with a glycine. The ECS(ASB9) complex mediates ubiquitination and degradation of CKB. As part of some ECS complex, promotes 'Lys-11'-linked ubiquitination and degradation of BTRC. As part of a multisubunit ECS complex, polyubiquitinates monoubiquitinated POLR2A. As part of the ECS(RAB40C) complex, mediates ANKRD28 ubiquitination and degradation, thereby regulating protein phosphatase 6 (PP6) complex activity and focal adhesion assembly during cell migration. As part of the ECS(RAB40A) complex, mediates RHOU 'Lys-48'-linked ubiquitination and degradation, thus inhibiting focal adhesion disassembly during cell migration. As part of the ECS(RAB40B) complex, mediates LIMA1/EPLIN and RAP2 ubiquitination, thereby regulating actin cytoskeleton dynamics and stress fiber formation during cell migration. May form a cell surface vasopressin receptor. The protein is Cullin-5 of Mus musculus (Mouse).